The primary structure comprises 25 residues: LVLPEVYDQDGHPLRIGQRYIINNP.

The protein belongs to the protease inhibitor I3 (leguminous Kunitz-type inhibitor) family. In terms of tissue distribution, cortex of tuber.

Its function is as follows. Inhibitor of subtilisin. Inhibits moderately trypsin and chymotrypsin (serine proteases). May protect the plant by inhibiting proteases of invading organisms. This is Cysteine protease inhibitor 2 from Solanum tuberosum (Potato).